Here is a 713-residue protein sequence, read N- to C-terminus: Peroxisomal biogenesis factor 8 (713 aa).

Residues 1-31 (MYRLGSQGRSIQSQLQNGDSSSGRPLQLQGT) are disordered. Polar residues predominate over residues 7 to 30 (QGRSIQSQLQNGDSSSGRPLQLQG). Positions 711-713 (AKL) match the Microbody targeting signal motif.

Interacts with PEX5 (via N-terminus).

It localises to the peroxisome membrane. In terms of biological role, essential component of the machinery required for the import of both PTS1 and PTS2 (and perhaps all) peroxisomal matrix proteins. Binding of PEX8 to the N-terminus of PEX5 cargo receptor induces a conformational change of the TPR domains and decrease their binding affinity to cargo, facilitating the release of the PTS1 proteins within the peroxisome. This is Peroxisomal biogenesis factor 8 from Komagataella phaffii (strain GS115 / ATCC 20864) (Yeast).